The sequence spans 1451 residues: MYAVYRQAHPPTAVEFAVYCNFISSQEKNLVVAGTSQLYVYRIIYDVESTSKSEKSSDGKSRKEKLEQVASFSLFGNVMSMASVQLVGTNRDALLLSFKDAKLSVVEYDPGTHDLKTLSLHYFEEPELRDGFVQNVHIPMVRVDPENRCAVMLVYGTCLVVLPFRKDTLADEQEGIVGEGQKSSFLPSYIIDVRELDEKLLNIIDMKFLHGYYEPTLLILFEPNQTWPGRVAVRQDTCSIVAISLNIMQKVHPVIWSLSNLPFDCNQVMAVPKPIGGVVVFAVNSLLYLNQSVPPFGVSLNSLTNGTTAFPLRPQEEVKITLDCSQASFITSDKMVISLKGGEIYVLTLITDGMRSVRAFHFDKAAASVLTTCMMTMEPGYLFLGSRLGNSLLLRYTEKLQETPMEEGKENEEKEKQEEPPNKKKRVDSNWAGCPGKGNLPDELDEIEVYGSEAQSGTQLATYSFEVCDSILNIGPCASASMGEPAFLSEEFQTNPEPDLEVVVCSGYGKNGALSVLQKSIRPQVVTTFELPGCHDMWTVIYCEEKPEKPSAEGDGESPEEEKREPTIEDDKKKHGFLILSREDSTMILQTGQEIMELDTSGFATQGPTVYAGNIGDNKYIIQVSPMGIRLLEGVNQLHFIPVDLGSPIVHCSVADPYVVIMTAEGVVTMFVLKNDSYMGKSHRLALQKPQIHTQSRVITLCAYRDVSGMFTTENKVSFLAKEEIAIRTNSETETIIQDISNTVDDEEEMLYGESNPLTSPNKEESSRGSAAASSAHTGKESGSGRQEPSHWCLLVRENGVMEIYQLPDWRLVFLVKNFPVGQRVLVDSSASQSATQGELKKEEVTRQGDIPLVKEVALVSLGYNHSRPYLLAHVEQELLIYEAFPYDQQQAQSNLKVRFKKMPHNINYREKKVKVRKDKKPEGQGEDTLGVKGRVARFRYFQDISGYSGVFICGPSPHWMLVTSRGAMRLHPMTIDGAIESFSPFHNINCPKGFLYFNKQGELRISVLPTYLSYDAPWPVRKIPLRCTVHYVSYHVESKVYAVCTSVKEPCTRIPRMTGEEKEFETIERDERYIHPQQDKFSIQLISPVSWEAIPNTRVDLEEWEHVTCMKTVALKSQETVSGLKGYVALGTCLMQGEEVTCRGRILILDVIEVVPEPGQPLTKNKFKVLYEKEQKGPVTALCHCSGFLVSAIGQKIFLWSLKDNDLTGMAFIDTQLYIHQMYSIKNFILAADVMKSISLLRYQPESKTLSLVSRDAKPLEVYSIEFMVDNNQLGFLVSDRDKNLMVYMYLPEAKESFGGMRLLRRADFNVGSHVNAFWRMPCRGTLDTANKKALTWDNKHITWFATLDGGVGLLLPMQEKTYRRLLMLQNALTTMLPHHAGLNPKAFRMLHCDRRTLQNAVKNILDGELLNKYLYLSTMERSELAKKIGTTPDIILDDLLEIERVTAHF.

2 stretches are compositionally biased toward basic and acidic residues: residues 401 to 422 (QETP…EPPN) and 561 to 572 (EEKREPTIEDDK). 3 disordered regions span residues 401-432 (QETP…SNWA), 548-572 (EKPS…EDDK), and 753-789 (GESN…RQEP). The Nuclear localization signal signature appears at 901–916 (KKMPHNINYREKKVKV).

This sequence belongs to the CPSF1 family.

The protein localises to the nucleus. It is found in the nucleoplasm. Component of the cleavage and polyadenylation specificity factor (CPSF) complex that plays a key role in pre-mRNA 3'-end formation, recognizing the AAUAAA signal sequence and interacting with poly(A) polymerase and other factors to bring about cleavage and poly(A) addition. This subunit is involved in the RNA recognition step of the polyadenylation reaction. Plays a role in eye morphogenesis and the development of retinal ganglion cell projections to the tectum. The sequence is that of Cleavage and polyadenylation specificity factor subunit 1 (cpsf1) from Danio rerio (Zebrafish).